A 130-amino-acid chain; its full sequence is RutC family protein slr0709 (130 aa).

This sequence belongs to the RutC family.

This is RutC family protein slr0709 from Synechocystis sp. (strain ATCC 27184 / PCC 6803 / Kazusa).